The sequence spans 930 residues: Bifunctional uridylyltransferase/uridylyl-removing enzyme (930 aa).

Residues 1 to 387 form a uridylyltransferase region; sequence MAPASEAGPA…IMGLFRRKKR (387 aa). The interval 388–741 is uridylyl-removing; the sequence is LKPEYSLVNG…LDPDPDRDAT (354 aa). Residues 504-626 form the HD domain; that stretch reads VDEHTIQCIS…VRSKKRLDLL (123 aa). ACT domains are found at residues 742 to 818 and 852 to 927; these read RACF…VVAR and IIEV…GAER.

The protein belongs to the GlnD family. Requires Mg(2+) as cofactor.

It catalyses the reaction [protein-PII]-L-tyrosine + UTP = [protein-PII]-uridylyl-L-tyrosine + diphosphate. The enzyme catalyses [protein-PII]-uridylyl-L-tyrosine + H2O = [protein-PII]-L-tyrosine + UMP + H(+). Its activity is regulated as follows. Uridylyltransferase (UTase) activity is inhibited by glutamine, while glutamine activates uridylyl-removing (UR) activity. Functionally, modifies, by uridylylation and deuridylylation, the PII regulatory proteins (GlnB and homologs), in response to the nitrogen status of the cell that GlnD senses through the glutamine level. Under low glutamine levels, catalyzes the conversion of the PII proteins and UTP to PII-UMP and PPi, while under higher glutamine levels, GlnD hydrolyzes PII-UMP to PII and UMP (deuridylylation). Thus, controls uridylylation state and activity of the PII proteins, and plays an important role in the regulation of nitrogen fixation and metabolism. This Cereibacter sphaeroides (strain ATCC 17023 / DSM 158 / JCM 6121 / CCUG 31486 / LMG 2827 / NBRC 12203 / NCIMB 8253 / ATH 2.4.1.) (Rhodobacter sphaeroides) protein is Bifunctional uridylyltransferase/uridylyl-removing enzyme.